The chain runs to 180 residues: Translation initiation factor IF-3 (180 aa).

The protein belongs to the IF-3 family. In terms of assembly, monomer.

Its subcellular location is the cytoplasm. Functionally, IF-3 binds to the 30S ribosomal subunit and shifts the equilibrium between 70S ribosomes and their 50S and 30S subunits in favor of the free subunits, thus enhancing the availability of 30S subunits on which protein synthesis initiation begins. This chain is Translation initiation factor IF-3, found in Xylella fastidiosa (strain 9a5c).